Consider the following 366-residue polypeptide: Ribosomal RNA large subunit methyltransferase M (366 aa).

S-adenosyl-L-methionine-binding positions include serine 188, 221–224 (CPGG), aspartate 240, aspartate 260, and aspartate 277. The active-site Proton acceptor is the lysine 306.

The protein belongs to the class I-like SAM-binding methyltransferase superfamily. RNA methyltransferase RlmE family. RlmM subfamily. As to quaternary structure, monomer.

Its subcellular location is the cytoplasm. It catalyses the reaction cytidine(2498) in 23S rRNA + S-adenosyl-L-methionine = 2'-O-methylcytidine(2498) in 23S rRNA + S-adenosyl-L-homocysteine + H(+). In terms of biological role, catalyzes the 2'-O-methylation at nucleotide C2498 in 23S rRNA. This Cronobacter sakazakii (strain ATCC BAA-894) (Enterobacter sakazakii) protein is Ribosomal RNA large subunit methyltransferase M.